Reading from the N-terminus, the 163-residue chain is Protein NAG1 (163 aa).

The helical transmembrane segment at 76–96 threads the bilayer; the sequence is ACFSVRIVLPLSLTISISALM.

It is found in the membrane. In terms of biological role, involved in yeast cell wall biogenesis. The protein is Protein NAG1 (NAG1) of Saccharomyces cerevisiae (strain ATCC 204508 / S288c) (Baker's yeast).